Reading from the N-terminus, the 168-residue chain is G/U mismatch-specific DNA glycosylase (168 aa).

This sequence belongs to the uracil-DNA glycosylase (UDG) superfamily. TDG/mug family. Binds DNA as a monomer.

The protein localises to the cytoplasm. The enzyme catalyses Specifically hydrolyzes mismatched double-stranded DNA and polynucleotides, releasing free uracil.. In terms of biological role, excises ethenocytosine and uracil, which can arise by alkylation or deamination of cytosine, respectively, from the corresponding mispairs with guanine in ds-DNA. It is capable of hydrolyzing the carbon-nitrogen bond between the sugar-phosphate backbone of the DNA and the mispaired base. The complementary strand guanine functions in substrate recognition. Required for DNA damage lesion repair in stationary-phase cells. The polypeptide is G/U mismatch-specific DNA glycosylase (Salmonella choleraesuis (strain SC-B67)).